We begin with the raw amino-acid sequence, 221 residues long: ATP-dependent dethiobiotin synthetase BioD (221 aa).

12–17 (EVGKTV) contributes to the ATP binding site. Mg(2+) is bound at residue Thr-16. The active site involves Lys-39. Residue Thr-43 participates in substrate binding. ATP is bound by residues Asp-47, 105–108 (EGLG), and 165–166 (SC). 2 residues coordinate Mg(2+): Asp-47 and Glu-105.

The protein belongs to the dethiobiotin synthetase family. In terms of assembly, homodimer. It depends on Mg(2+) as a cofactor.

Its subcellular location is the cytoplasm. The catalysed reaction is (7R,8S)-7,8-diammoniononanoate + CO2 + ATP = (4R,5S)-dethiobiotin + ADP + phosphate + 3 H(+). The enzyme catalyses (7R,8S)-8-amino-7-(carboxyamino)nonanoate + ATP = (4R,5S)-dethiobiotin + ADP + phosphate + H(+). Its pathway is cofactor biosynthesis; biotin biosynthesis; biotin from 7,8-diaminononanoate: step 1/2. Its function is as follows. Catalyzes a mechanistically unusual reaction, the ATP-dependent insertion of CO2 between the N7 and N8 nitrogen atoms of 7,8-diaminopelargonic acid (DAPA, also called 7,8-diammoniononanoate) to form a ureido ring. This cyanobacterium does not encode bioA (which catalyzes the formation of the precursor for this reaction in the cannonical pathway), instead it encodes bioU, which replaces bioA and also performs the first half of the cannonical BioD reaction. Thus in this organism BioD has a different substrate. The sequence is that of ATP-dependent dethiobiotin synthetase BioD from Crocosphaera subtropica (strain ATCC 51142 / BH68) (Cyanothece sp. (strain ATCC 51142)).